Consider the following 385-residue polypeptide: Lipid-A-disaccharide synthase (385 aa).

This sequence belongs to the LpxB family.

It carries out the reaction a lipid X + a UDP-2-N,3-O-bis[(3R)-3-hydroxyacyl]-alpha-D-glucosamine = a lipid A disaccharide + UDP + H(+). The protein operates within bacterial outer membrane biogenesis; LPS lipid A biosynthesis. Its function is as follows. Condensation of UDP-2,3-diacylglucosamine and 2,3-diacylglucosamine-1-phosphate to form lipid A disaccharide, a precursor of lipid A, a phosphorylated glycolipid that anchors the lipopolysaccharide to the outer membrane of the cell. The sequence is that of Lipid-A-disaccharide synthase from Pseudoalteromonas translucida (strain TAC 125).